Reading from the N-terminus, the 128-residue chain is Profilin (128 aa).

Belongs to the profilin family.

More likely to influence phosphoinositide metabolism than actin assembly. The chain is Profilin from Homo sapiens (Human).